A 331-amino-acid polypeptide reads, in one-letter code: Cytosolic 5'-nucleotidase 3A (331 aa).

Catalysis depends on Asp-83, which acts as the Nucleophile. Mg(2+) is bound by residues Asp-83 and Asp-85. Asp-85 acts as the Proton donor in catalysis. Glu-130 serves as a coordination point for CMP. 2 residues coordinate N(7)-methyl-GMP: Glu-130 and Ser-151. Residues 198-200 and Lys-247 each bind substrate; that span reads SAG. Asp-272 is a Mg(2+) binding site. Ser-273 carries the phosphoserine modification.

It belongs to the pyrimidine 5'-nucleotidase family. As to quaternary structure, monomer. In terms of tissue distribution, isoform 2 is highly expressed in the brain, heart, spleen, kidney and blood. Isoform 2 is expressed (at protein level) in the spleen, skeletal muscle and gastrointestinal epithelia.

It localises to the cytoplasm. It catalyses the reaction N(7)-methyl-GMP + H2O = N(7)-methylguanosine + phosphate. The enzyme catalyses a ribonucleoside 5'-phosphate + H2O = a ribonucleoside + phosphate. In terms of biological role, nucleotidase which shows specific activity towards cytidine monophosphate (CMP) and 7-methylguanosine monophosphate (m(7)GMP). CMP seems to be the preferred substrate. This is Cytosolic 5'-nucleotidase 3A (Nt5c3a) from Mus musculus (Mouse).